A 118-amino-acid polypeptide reads, in one-letter code: Diacylglycerol kinase (118 aa).

Glu28 serves as a coordination point for a divalent metal cation. 2 helical membrane passes run 29–49 (TAFRHECFLACILIPLTFFLG) and 55–75 (IILMISSVLLVMALELLNSAV). Glu69 functions as the Proton acceptor in the catalytic mechanism. Glu76 provides a ligand contact to a divalent metal cation. The helical transmembrane segment at 98–118 (SASVFIALCIVGIVWGGILFF) threads the bilayer.

It belongs to the bacterial diacylglycerol kinase family. Mg(2+) serves as cofactor.

The protein localises to the cell inner membrane. It catalyses the reaction a 1,2-diacyl-sn-glycerol + ATP = a 1,2-diacyl-sn-glycero-3-phosphate + ADP + H(+). Functionally, catalyzes the ATP-dependent phosphorylation of sn-l,2-diacylglycerol (DAG) to phosphatidic acid. Involved in the recycling of diacylglycerol produced as a by-product during membrane-derived oligosaccharide (MDO) biosynthesis. This Haemophilus influenzae (strain ATCC 51907 / DSM 11121 / KW20 / Rd) protein is Diacylglycerol kinase (dgkA).